Consider the following 62-residue polypeptide: Large ribosomal subunit protein uL30 (62 aa).

This sequence belongs to the universal ribosomal protein uL30 family. Part of the 50S ribosomal subunit.

In Geobacillus thermodenitrificans (strain NG80-2), this protein is Large ribosomal subunit protein uL30.